Consider the following 191-residue polypeptide: Peptidyl-tRNA hydrolase (191 aa).

Y15 lines the tRNA pocket. Residue H20 is the Proton acceptor of the active site. The tRNA site is built by F66, N68, and N114.

It belongs to the PTH family. In terms of assembly, monomer.

The protein resides in the cytoplasm. It carries out the reaction an N-acyl-L-alpha-aminoacyl-tRNA + H2O = an N-acyl-L-amino acid + a tRNA + H(+). Its function is as follows. Hydrolyzes ribosome-free peptidyl-tRNAs (with 1 or more amino acids incorporated), which drop off the ribosome during protein synthesis, or as a result of ribosome stalling. Catalyzes the release of premature peptidyl moieties from peptidyl-tRNA molecules trapped in stalled 50S ribosomal subunits, and thus maintains levels of free tRNAs and 50S ribosomes. This chain is Peptidyl-tRNA hydrolase, found in Streptococcus agalactiae serotype Ia (strain ATCC 27591 / A909 / CDC SS700).